Here is a 402-residue protein sequence, read N- to C-terminus: Protochlorophyllide reductase B, chloroplastic (402 aa).

It belongs to the short-chain dehydrogenases/reductases (SDR) family. POR subfamily.

The protein resides in the plastid. Its subcellular location is the chloroplast. It carries out the reaction chlorophyllide a + NADP(+) = protochlorophyllide a + NADPH + H(+). The protein operates within porphyrin-containing compound metabolism; chlorophyll biosynthesis. Its function is as follows. Phototransformation of protochlorophyllide (Pchlide) to chlorophyllide (Chlide). The protein is Protochlorophyllide reductase B, chloroplastic (PORB) of Oryza sativa subsp. japonica (Rice).